A 99-amino-acid polypeptide reads, in one-letter code: Protein RnfH (99 aa).

This sequence belongs to the UPF0125 (RnfH) family.

The sequence is that of Protein RnfH from Tolumonas auensis (strain DSM 9187 / NBRC 110442 / TA 4).